The primary structure comprises 562 residues: Protein wntless (562 aa).

At 1-13 the chain is on the cytoplasmic side; sequence MSGTILENLSGRK. Residues 14–34 form a helical membrane-spanning segment; the sequence is LSILVATLLLCQVLCFLLGGL. The Lumenal portion of the chain corresponds to 35 to 239; the sequence is YAPLPAGHVT…AIHQNGGFTQ (205 aa). Residue Asn58 is glycosylated (N-linked (GlcNAc...) asparagine). Residues 240–260 form a helical membrane-spanning segment; the sequence is IWLLLKTMLFPFVVGIMIWFW. The Cytoplasmic portion of the chain corresponds to 261-270; sequence RRVHLLQRSP. A helical membrane pass occupies residues 271–291; sequence ALLEYMLIYLGAALTFLNLPL. The Lumenal segment spans residues 292-311; sequence EYLSLVYEMPYMLLLSDIRQ. A helical transmembrane segment spans residues 312–332; sequence GIFYAMLLTFWLVFAGEHMLI. The Cytoplasmic portion of the chain corresponds to 333–344; sequence QDAPNKSTIRSR. The chain crosses the membrane as a helical span at residues 345–365; that stretch reads YWKHLSAVVVGCISLFVFDIC. Topologically, residues 366–390 are lumenal; it reads ERGVQLRNPFYSIWTTPLGAKVAMT. The chain crosses the membrane as a helical span at residues 391-411; sequence FIVLAGVSAAIYFLFLCYMIW. Residues 412-441 lie on the Cytoplasmic side of the membrane; sequence KVFRNIGDKRTSLPSMSQARRLHYEGLIYR. The helical transmembrane segment at 442–462 threads the bilayer; the sequence is FKFLMLATLVCAALTVAGFIM. At 463 to 482 the chain is on the lumenal side; sequence GQMAEGQWDWNDNVAIQPTS. The chain crosses the membrane as a helical span at residues 483–503; that stretch reads AFLTGVYGMWNIYIFALLILY. Residues 504–562 lie on the Cytoplasmic side of the membrane; sequence APSHKQWPAMHHSDETTQSNENIVASAASEEIEFSHLPSDSNPSEISSLTSFTRKVAFD.

This sequence belongs to the wntless family. As to quaternary structure, interacts with wg; in the Golgi. Interacts with Vps35, a component of the retromer complex; wls stability is regulated by Vps35.

It localises to the presynaptic cell membrane. It is found in the postsynaptic cell membrane. Its subcellular location is the cell membrane. The protein localises to the endoplasmic reticulum membrane. The protein resides in the endosome membrane. It localises to the golgi apparatus membrane. In terms of biological role, a segment polarity gene required for wingless (wg)-dependent patterning processes, acting in both wg-sending cells and wg-target cells. In non-neuronal cells wls directs wg secretion. The wls traffic loop encompasses the Golgi, the cell surface, an endocytic compartment and a retrograde route leading back to the Golgi, and involves clathrin-mediated endocytosis and the retromer complex (a conserved protein complex consisting of Vps35 and Vps26). In neuronal cells (the larval motorneuron NMJ), the wg signal moves across the synapse via the release of wls-containing exosome-like vesicles. Postsynaptic wls is required for the trafficking of fz2 through the fz2-interacting protein Grip. The protein is Protein wntless of Drosophila sechellia (Fruit fly).